Consider the following 336-residue polypeptide: Inositol 2-dehydrogenase (336 aa).

The protein belongs to the Gfo/Idh/MocA family. As to quaternary structure, homotetramer.

It carries out the reaction myo-inositol + NAD(+) = scyllo-inosose + NADH + H(+). Its function is as follows. Involved in the oxidation of myo-inositol (MI) to 2-keto-myo-inositol (2KMI or 2-inosose). The chain is Inositol 2-dehydrogenase from Salmonella agona (strain SL483).